Here is a 508-residue protein sequence, read N- to C-terminus: MGLPWYRVHTVVLNDPGRLLSVHIMHTALVAGWAGSMALYELAVFDPSDPVLDPMWRQGMFVIPFMTRLGITNSWGGWNITGGTITNPGLWSYEGVAAAHIVFSGLCFLAAIWHWVYWDLEIFCDERTGKPSLDLPKIFGIHLFLSGVACFGFGAFHVTGLYGPGIWVSDPYGLTGKVQPVNPAWGVEGFDPFVPGGIASHHIAAGTLGILAGLFHLSVRPPQRLYKGLRMGNIETVLSSSIAAVFFAAFVVAGTMWYGSATTPIELFGPTRYQWDQGYFQQEIYRRVSAGLAENQSLSEAWAKIPEKLAFYDYIGNNPAKGGLFRAGSMDNGDGIAVGWLGHPVFRNKEGRELFVRRMPTFFETFPVVLVDGDGIVRADVPFRRAESKYSVEQVGVTVEFYGGELNGVSYSDPATVKKYARRAQLGEIFELDRATLKSDGVFRSSPRGWFTFGHASFALLFFFGHIWHGSRTLFRDVFAGIDPDLDAQVEFGAFQKLGDPTTKRQAV.

A run of 6 helical transmembrane segments spans residues 21 to 36, 101 to 115, 140 to 156, 203 to 218, 237 to 252, and 457 to 472; these read SVHI…WAGS, IVFS…IWHW, GIHL…FGAF, IAAG…FHLS, VLSS…AFVV, and SFAL…HGSR.

This sequence belongs to the PsbB/PsbC family. PsbB subfamily. As to quaternary structure, PSII is composed of 1 copy each of membrane proteins PsbA, PsbB, PsbC, PsbD, PsbE, PsbF, PsbH, PsbI, PsbJ, PsbK, PsbL, PsbM, PsbT, PsbX, PsbY, PsbZ, Psb30/Ycf12, at least 3 peripheral proteins of the oxygen-evolving complex and a large number of cofactors. It forms dimeric complexes. The cofactor is Binds multiple chlorophylls. PSII binds additional chlorophylls, carotenoids and specific lipids..

The protein resides in the plastid. Its subcellular location is the chloroplast thylakoid membrane. Its function is as follows. One of the components of the core complex of photosystem II (PSII). It binds chlorophyll and helps catalyze the primary light-induced photochemical processes of PSII. PSII is a light-driven water:plastoquinone oxidoreductase, using light energy to abstract electrons from H(2)O, generating O(2) and a proton gradient subsequently used for ATP formation. The chain is Photosystem II CP47 reaction center protein from Capsella bursa-pastoris (Shepherd's purse).